Consider the following 210-residue polypeptide: Proteasome subunit beta (210 aa).

A propeptide spans 1–10 (MKELDQLTKG) (removed in mature form; by autocatalysis). The active-site Nucleophile is the T11.

It belongs to the peptidase T1B family. The 20S proteasome core is composed of 14 alpha and 14 beta subunits that assemble into four stacked heptameric rings, resulting in a barrel-shaped structure. The two inner rings, each composed of seven catalytic beta subunits, are sandwiched by two outer rings, each composed of seven alpha subunits. The catalytic chamber with the active sites is on the inside of the barrel. Has a gated structure, the ends of the cylinder being occluded by the N-termini of the alpha-subunits. Is capped at one or both ends by the proteasome regulatory ATPase, PAN.

It is found in the cytoplasm. It carries out the reaction Cleavage of peptide bonds with very broad specificity.. The formation of the proteasomal ATPase PAN-20S proteasome complex, via the docking of the C-termini of PAN into the intersubunit pockets in the alpha-rings, triggers opening of the gate for substrate entry. Interconversion between the open-gate and close-gate conformations leads to a dynamic regulation of the 20S proteasome proteolysis activity. In terms of biological role, component of the proteasome core, a large protease complex with broad specificity involved in protein degradation. In Methanopyrus kandleri (strain AV19 / DSM 6324 / JCM 9639 / NBRC 100938), this protein is Proteasome subunit beta.